We begin with the raw amino-acid sequence, 126 residues long: Large ribosomal subunit protein eL32 (126 aa).

It belongs to the eukaryotic ribosomal protein eL32 family. Part of the 50S ribosomal subunit.

The chain is Large ribosomal subunit protein eL32 (rpl32e) from Thermococcus kodakarensis (strain ATCC BAA-918 / JCM 12380 / KOD1) (Pyrococcus kodakaraensis (strain KOD1)).